Consider the following 122-residue polypeptide: Large ribosomal subunit protein bL12 (122 aa).

This sequence belongs to the bacterial ribosomal protein bL12 family. As to quaternary structure, homodimer. Part of the ribosomal stalk of the 50S ribosomal subunit. Forms a multimeric L10(L12)X complex, where L10 forms an elongated spine to which 2 to 4 L12 dimers bind in a sequential fashion. Binds GTP-bound translation factors.

In terms of biological role, forms part of the ribosomal stalk which helps the ribosome interact with GTP-bound translation factors. Is thus essential for accurate translation. The chain is Large ribosomal subunit protein bL12 from Clostridium botulinum (strain 657 / Type Ba4).